Reading from the N-terminus, the 36-residue chain is Protein YmgL (36 aa).

The sequence is that of Protein YmgL from Escherichia coli (strain K12).